Reading from the N-terminus, the 355-residue chain is 45 kDa calcium-binding protein (355 aa).

The N-terminal stretch at 1-29 is a signal peptide; that stretch reads MASRQAPLCGLAPCCLWLLGVVLLMNASA. An N-linked (GlcNAc...) asparagine glycan is attached at N33. EF-hand domains follow at residues 91-126 and 130-165; these read KSRR…KTAE and EAVA…TKGH. At S92 the chain carries Phosphoserine. Ca(2+)-binding residues include D104, N106, D108, R110, E115, D143, D145, D147, H149, and E154. Residues T186 and T210 each carry the phosphothreonine modification. EF-hand domains lie at 226–261, 271–306, and 307–342; these read MLQF…TVEN, WVRD…MNEF, and SALN…FTGS. D239, D241, D243, K245, and E250 together coordinate Ca(2+). Residue T258 is modified to Phosphothreonine. Positions 284, 286, and 288 each coordinate Ca(2+). At T292 the chain carries Phosphothreonine. Residues E295, D320, N322, N324, Y326, and E331 each coordinate Ca(2+). The necessary for intracellular retention in Golgi apparatus lumen stretch occupies residues 302 to 355; sequence PMNEFSALNEAKQMIAIADENQNHYLEPEEVLKYSEFFTGSKLVDYARSVHEEF.

It belongs to the CREC family.

It is found in the golgi apparatus lumen. Its function is as follows. May regulate calcium-dependent activities in the endoplasmic reticulum lumen or post-ER compartment. The sequence is that of 45 kDa calcium-binding protein (SDF4) from Bos taurus (Bovine).